A 307-amino-acid polypeptide reads, in one-letter code: Transcription initiation factor IIB 5 (307 aa).

The TFIIB-type zinc finger occupies 19-47 (TTEPCPECGGPVRTNSAETVCADCGLIID). Zn(2+)-binding residues include cysteine 23, cysteine 26, cysteine 39, and cysteine 42. Composition is skewed to basic and acidic residues over residues 54–66 (GPEW…DTAK) and 107–121 (MRRE…STKE). The disordered stretch occupies residues 54–121 (GPEWHRDDAD…SRGRWRSTKE (68 aa)). A run of 2 repeats spans residues 129–212 (TEIR…NEEL) and 223–304 (QFVP…RLLS).

Belongs to the TFIIB family.

Its function is as follows. Stabilizes TBP binding to an archaeal box-A promoter. Also responsible for recruiting RNA polymerase II to the pre-initiation complex (DNA-TBP-TFIIB). This Halobacterium salinarum (strain ATCC 700922 / JCM 11081 / NRC-1) (Halobacterium halobium) protein is Transcription initiation factor IIB 5.